The chain runs to 108 residues: uncharacterized protein (108 aa).

Composition is skewed to basic and acidic residues over residues 1–15 (MSEAKDNGSRDEVLV) and 53–69 (KLKDRESHQENEDRNSE). The interval 1–77 (MSEAKDNGSR…SELDQDEEDK (77 aa)) is disordered.

This is an uncharacterized protein from Homo sapiens (Human).